Consider the following 155-residue polypeptide: Small ribosomal subunit protein uS7c (155 aa).

The protein belongs to the universal ribosomal protein uS7 family. As to quaternary structure, part of the 30S ribosomal subunit.

The protein resides in the plastid. Its subcellular location is the chloroplast. One of the primary rRNA binding proteins, it binds directly to 16S rRNA where it nucleates assembly of the head domain of the 30S subunit. The protein is Small ribosomal subunit protein uS7c (rps7) of Aristolochia macrophylla (Dutchman's pipe vine).